The primary structure comprises 311 residues: Ribosomal protein L11 methyltransferase (311 aa).

Residues Thr162, Gly183, Asp205, and Asn248 each coordinate S-adenosyl-L-methionine.

This sequence belongs to the methyltransferase superfamily. PrmA family.

It is found in the cytoplasm. It catalyses the reaction L-lysyl-[protein] + 3 S-adenosyl-L-methionine = N(6),N(6),N(6)-trimethyl-L-lysyl-[protein] + 3 S-adenosyl-L-homocysteine + 3 H(+). Methylates ribosomal protein L11. This chain is Ribosomal protein L11 methyltransferase, found in Bacillus pumilus (strain SAFR-032).